The chain runs to 149 residues: Large ribosomal subunit protein uL15 (149 aa).

Residues 1–61 (MELNSLRPAL…GGQMPLQRRL (61 aa)) form a disordered region. Residues 30-39 (TATKGHKGQK) show a composition bias toward basic residues.

It belongs to the universal ribosomal protein uL15 family. Part of the 50S ribosomal subunit.

In terms of biological role, binds to the 23S rRNA. The chain is Large ribosomal subunit protein uL15 from Trichlorobacter lovleyi (strain ATCC BAA-1151 / DSM 17278 / SZ) (Geobacter lovleyi).